A 296-amino-acid chain; its full sequence is NAD kinase (296 aa).

The active-site Proton acceptor is Asp-72. NAD(+)-binding positions include Asp-72 to Gly-73, Asn-146 to Asp-147, Arg-157, Arg-174, Asp-176, Thr-187 to Ser-192, and Gln-247.

It belongs to the NAD kinase family. A divalent metal cation serves as cofactor.

Its subcellular location is the cytoplasm. The enzyme catalyses NAD(+) + ATP = ADP + NADP(+) + H(+). Involved in the regulation of the intracellular balance of NAD and NADP, and is a key enzyme in the biosynthesis of NADP. Catalyzes specifically the phosphorylation on 2'-hydroxyl of the adenosine moiety of NAD to yield NADP. This Hahella chejuensis (strain KCTC 2396) protein is NAD kinase.